The primary structure comprises 447 residues: Phosphoglucosamine mutase (447 aa).

The Phosphoserine intermediate role is filled by S100. Mg(2+)-binding residues include S100, D240, D242, and D244. The residue at position 100 (S100) is a Phosphoserine.

This sequence belongs to the phosphohexose mutase family. Mg(2+) serves as cofactor. Activated by phosphorylation.

It catalyses the reaction alpha-D-glucosamine 1-phosphate = D-glucosamine 6-phosphate. Catalyzes the conversion of glucosamine-6-phosphate to glucosamine-1-phosphate. In Clostridium botulinum (strain Eklund 17B / Type B), this protein is Phosphoglucosamine mutase.